Consider the following 804-residue polypeptide: Leucine--tRNA ligase (804 aa).

The 'HIGH' region motif lies at 40–51 (PYPSGAGLHVGH). The short motif at 574 to 578 (KMSKS) is the 'KMSKS' region element. ATP is bound at residue lysine 577.

This sequence belongs to the class-I aminoacyl-tRNA synthetase family.

The protein localises to the cytoplasm. The enzyme catalyses tRNA(Leu) + L-leucine + ATP = L-leucyl-tRNA(Leu) + AMP + diphosphate. This is Leucine--tRNA ligase from Shouchella clausii (strain KSM-K16) (Alkalihalobacillus clausii).